The chain runs to 131 residues: Small ribosomal subunit protein bS6 (131 aa).

The disordered stretch occupies residues 98 to 131 (EASPMVKAKDERRERREDFANETADDSEAGDSEE). Basic and acidic residues predominate over residues 104-116 (KAKDERRERREDF). Residues 120-131 (TADDSEAGDSEE) show a composition bias toward acidic residues.

It belongs to the bacterial ribosomal protein bS6 family.

Binds together with bS18 to 16S ribosomal RNA. This chain is Small ribosomal subunit protein bS6, found in Klebsiella pneumoniae (strain 342).